The sequence spans 298 residues: Lipoyl synthase (298 aa).

Cys40, Cys45, Cys51, Cys67, Cys71, Cys74, and Ser280 together coordinate [4Fe-4S] cluster. One can recognise a Radical SAM core domain in the interval 53-269 (AVRRTATFMI…KEIAMAKGFS (217 aa)).

It belongs to the radical SAM superfamily. Lipoyl synthase family. [4Fe-4S] cluster is required as a cofactor.

The protein resides in the cytoplasm. It carries out the reaction [[Fe-S] cluster scaffold protein carrying a second [4Fe-4S](2+) cluster] + N(6)-octanoyl-L-lysyl-[protein] + 2 oxidized [2Fe-2S]-[ferredoxin] + 2 S-adenosyl-L-methionine + 4 H(+) = [[Fe-S] cluster scaffold protein] + N(6)-[(R)-dihydrolipoyl]-L-lysyl-[protein] + 4 Fe(3+) + 2 hydrogen sulfide + 2 5'-deoxyadenosine + 2 L-methionine + 2 reduced [2Fe-2S]-[ferredoxin]. It functions in the pathway protein modification; protein lipoylation via endogenous pathway; protein N(6)-(lipoyl)lysine from octanoyl-[acyl-carrier-protein]. Catalyzes the radical-mediated insertion of two sulfur atoms into the C-6 and C-8 positions of the octanoyl moiety bound to the lipoyl domains of lipoate-dependent enzymes, thereby converting the octanoylated domains into lipoylated derivatives. The chain is Lipoyl synthase from Bacillus pumilus (strain SAFR-032).